A 205-amino-acid chain; its full sequence is Large ribosomal subunit protein uL3c (205 aa).

The tract at residues arginine 130–threonine 150 is disordered.

It belongs to the universal ribosomal protein uL3 family. In terms of assembly, part of the 50S ribosomal subunit.

It is found in the plastid. It localises to the chloroplast. In terms of biological role, one of the primary rRNA binding proteins, it binds directly near the 3'-end of the 23S rRNA, where it nucleates assembly of the 50S subunit. The sequence is that of Large ribosomal subunit protein uL3c (rpl3) from Gracilaria tenuistipitata var. liui (Red alga).